Reading from the N-terminus, the 185-residue chain is Homeobox-leucine zipper protein ATHB-22 (185 aa).

The homeobox DNA-binding region spans 76-135 (TSEQLKFLERSFQEEIKLNPDRKMKLNPDRKMKLSKELGLQPRQIAVWFQNRKARWKNKQ). The segment at 136–164 (LEHLYESLRQEFDIVSREKELLQEELIQL) is leucine-zipper.

Belongs to the HD-ZIP homeobox family. Class I subfamily. In terms of tissue distribution, expressed in siliques.

It is found in the nucleus. Its function is as follows. Probable transcription factor. The protein is Homeobox-leucine zipper protein ATHB-22 (ATHB-22) of Arabidopsis thaliana (Mouse-ear cress).